Consider the following 386-residue polypeptide: Ferredoxin--NADP reductase (386 aa).

The CpcD-like domain occupies 9 to 67 (SRMFRYEVVGLRQTAETEKTNYAIRNSGSQFFNVPYDRMNQFMQQITRWGGKIVSIQPL). In terms of domain architecture, FAD-binding FR-type spans 104 to 228 (NNPCIGKVIS…TGPVGKEMLL (125 aa)). FAD is bound by residues 163–166 (RLYS), 184–186 (CVR), Tyr-190, 202–204 (VCS), and Thr-243. Residues Ser-166 and Arg-186 each coordinate NADP(+). Residues Thr-243, 275 to 276 (VA), 305 to 306 (SR), 315 to 319 (KMYIQ), 344 to 345 (GL), and Glu-384 contribute to the NADP(+) site.

It belongs to the ferredoxin--NADP reductase type 1 family. Requires FAD as cofactor.

The protein resides in the cellular thylakoid membrane. It carries out the reaction 2 reduced [2Fe-2S]-[ferredoxin] + NADP(+) + H(+) = 2 oxidized [2Fe-2S]-[ferredoxin] + NADPH. The sequence is that of Ferredoxin--NADP reductase (petH) from Thermosynechococcus vestitus (strain NIES-2133 / IAM M-273 / BP-1).